The chain runs to 89 residues: Conotoxin Lt6.4 (89 aa).

A signal peptide spans 1-22 (MKLTCVPIVAMLFLMACQLITA). Positions 23–50 (DYSREKHGYSAEKSSDKIQDSFYSKLTK) are excised as a propeptide. 3 cysteine pairs are disulfide-bonded: Cys-52–Cys-67, Cys-59–Cys-71, and Cys-66–Cys-80.

This sequence belongs to the conotoxin O1 superfamily. Expressed by the venom duct.

It is found in the secreted. In Conus litteratus (Lettered cone), this protein is Conotoxin Lt6.4.